The chain runs to 379 residues: Putative zinc metalloprotease BR1156/BS1330_I1152 (379 aa).

A Zn(2+)-binding site is contributed by His-33. Glu-34 is a catalytic residue. His-37 contacts Zn(2+). A run of 4 helical transmembrane segments spans residues 39-61, 122-144, 305-327, and 355-377; these read LVAR…ELLG, VFAG…FALY, FDWL…LFPL, and IFYR…NDLF. A PDZ domain is found at 133-208; that stretch reads TIAIFSVFFA…LNFTVERDGK (76 aa).

This sequence belongs to the peptidase M50B family. Requires Zn(2+) as cofactor.

It localises to the cell inner membrane. The polypeptide is Putative zinc metalloprotease BR1156/BS1330_I1152 (Brucella suis biovar 1 (strain 1330)).